The sequence spans 157 residues: S-ribosylhomocysteine lyase (157 aa).

3 residues coordinate Fe cation: H54, H58, and C124.

This sequence belongs to the LuxS family. As to quaternary structure, homodimer. Fe cation serves as cofactor.

The enzyme catalyses S-(5-deoxy-D-ribos-5-yl)-L-homocysteine = (S)-4,5-dihydroxypentane-2,3-dione + L-homocysteine. In terms of biological role, involved in the synthesis of autoinducer 2 (AI-2) which is secreted by bacteria and is used to communicate both the cell density and the metabolic potential of the environment. The regulation of gene expression in response to changes in cell density is called quorum sensing. Catalyzes the transformation of S-ribosylhomocysteine (RHC) to homocysteine (HC) and 4,5-dihydroxy-2,3-pentadione (DPD). This is S-ribosylhomocysteine lyase from Oenococcus oeni (strain ATCC BAA-331 / PSU-1).